Here is a 69-residue protein sequence, read N- to C-terminus: Sec-independent protein translocase protein TatA (69 aa).

The helical transmembrane segment at 1 to 21 threads the bilayer; that stretch reads MFGLGGQELVLILLIILLLFG. The segment at 48 to 69 is disordered; sequence EELNKAVDDTPEKEKKSSSEKS.

The protein belongs to the TatA/E family. Forms a complex with TatC.

It localises to the cell inner membrane. Functionally, part of the twin-arginine translocation (Tat) system that transports large folded proteins containing a characteristic twin-arginine motif in their signal peptide across membranes. TatA could form the protein-conducting channel of the Tat system. The sequence is that of Sec-independent protein translocase protein TatA from Chlorobium phaeobacteroides (strain BS1).